A 398-amino-acid chain; its full sequence is F-box/kelch-repeat protein At1g30090 (398 aa).

Positions E51–R98 constitute an F-box domain. Kelch repeat units follow at residues P106–V152, T159–G207, I209–G255, L257–R304, and L305–C346.

In Arabidopsis thaliana (Mouse-ear cress), this protein is F-box/kelch-repeat protein At1g30090.